Consider the following 478-residue polypeptide: Kynureninase (478 aa).

Pyridoxal 5'-phosphate is bound by residues Leu138, Thr139, 166–169 (FPSD), Asp252, His255, and Tyr277. N6-(pyridoxal phosphate)lysine is present on Lys278. 2 residues coordinate pyridoxal 5'-phosphate: Trp315 and Asn343.

Belongs to the kynureninase family. Homodimer. Pyridoxal 5'-phosphate is required as a cofactor.

Its subcellular location is the cytoplasm. The catalysed reaction is L-kynurenine + H2O = anthranilate + L-alanine + H(+). It catalyses the reaction 3-hydroxy-L-kynurenine + H2O = 3-hydroxyanthranilate + L-alanine + H(+). It functions in the pathway amino-acid degradation; L-kynurenine degradation; L-alanine and anthranilate from L-kynurenine: step 1/1. Its pathway is cofactor biosynthesis; NAD(+) biosynthesis; quinolinate from L-kynurenine: step 2/3. Its function is as follows. Catalyzes the cleavage of L-kynurenine (L-Kyn) and L-3-hydroxykynurenine (L-3OHKyn) into anthranilic acid (AA) and 3-hydroxyanthranilic acid (3-OHAA), respectively. This chain is Kynureninase, found in Coccidioides immitis (strain RS) (Valley fever fungus).